A 441-amino-acid polypeptide reads, in one-letter code: Nucleolar and spindle-associated protein 1 (441 aa).

2 disordered regions span residues 47–186 (ARKG…PNFK) and 216–267 (MNEL…LGLK). Composition is skewed to polar residues over residues 56–74 (ESQT…ISNQ) and 100–116 (DSQQ…PTEF). The segment covering 117–126 (QNHEKQESQD) has biased composition (basic and acidic residues). Ser124 carries the post-translational modification Phosphoserine; by ATM. A Phosphoserine modification is found at Ser135. The segment covering 152 to 171 (RDSKVPSEGKKSLYTDESSK) has biased composition (basic and acidic residues). A Phosphothreonine modification is found at Thr182. The interval 237–382 (GRLSVASTPI…HKGKLKPWGQ (146 aa)) is interaction with microtubules. A Phosphoserine modification is found at Ser240. Polar residues predominate over residues 241-264 (VASTPISQRRSQGRSCGPASQSTL). Thr244 is subject to Phosphothreonine. Phosphoserine is present on residues Ser247, Ser255, Ser269, Ser276, and Ser311. Positions 286–319 (AATKDNEHKRSLTKTPARKSAHVTVSGGTPKGEA) are disordered. A phosphothreonine mark is found at Thr314, Thr338, and Thr349. Residues Ser352 and Ser363 each carry the phosphoserine modification. Residues 384–390 (KENNYLN) carry the KEN box motif. The interval 401–427 (KTYKQPHLQTKEEQRKKREQERKEKKA) is disordered. Residues 407–432 (HLQTKEEQRKKREQERKEKKAKVLGM) are a coiled coil. Positions 409-424 (QTKEEQRKKREQERKE) are enriched in basic and acidic residues. At Lys411 the chain carries N6-acetyllysine.

This sequence belongs to the NUSAP family. As to quaternary structure, interacts with DNA and microtubules. Microtubule bundling is inhibited by IPO7, KPNA2 and KPNB1 while association with DNA is also inhibited by IPO7 and KPNA2. Post-translationally, ubiquitinated. Ubiquitination by FZR1 may lead to proteasome-dependent degradation of this protein. Phosphorylation by ATM in G2/M-phase induces mitotic arrest.

Its subcellular location is the cytoplasm. The protein resides in the nucleus. The protein localises to the nucleolus. It is found in the cytoskeleton. It localises to the spindle. Its subcellular location is the chromosome. Its function is as follows. Microtubule-associated protein with the capacity to bundle and stabilize microtubules. May associate with chromosomes and promote the organization of mitotic spindle microtubules around them. The chain is Nucleolar and spindle-associated protein 1 (NUSAP1) from Homo sapiens (Human).